A 225-amino-acid polypeptide reads, in one-letter code: MKKILKNDWEPILGPEFEKPYYQNLRQFLKEEYSMRVIYPNANDIFNALHYTSYEDTKVVILGQDPYHGPNQAHGLSFSVQPGVRVPPSLQNMYKELKADIGCEIPNHGYLVKWAEQGVLLLNTVLTVRQGEANSHKGKGWEQFTDRVIELLNEREKPVIFILWGRHAQAKKKRITNPNHYIIESVHPSPLSASRGFFGSKPFSKVNRFLSSIGEKEIDWQIPNL.

Asp-65 serves as the catalytic Proton acceptor.

This sequence belongs to the uracil-DNA glycosylase (UDG) superfamily. UNG family.

It is found in the cytoplasm. The enzyme catalyses Hydrolyzes single-stranded DNA or mismatched double-stranded DNA and polynucleotides, releasing free uracil.. Excises uracil residues from the DNA which can arise as a result of misincorporation of dUMP residues by DNA polymerase or due to deamination of cytosine. This chain is Uracil-DNA glycosylase, found in Bacillus cytotoxicus (strain DSM 22905 / CIP 110041 / 391-98 / NVH 391-98).